The chain runs to 499 residues: Aspartyl/glutamyl-tRNA(Asn/Gln) amidotransferase subunit B (499 aa).

Belongs to the GatB/GatE family. GatB subfamily. Heterotrimer of A, B and C subunits.

The catalysed reaction is L-glutamyl-tRNA(Gln) + L-glutamine + ATP + H2O = L-glutaminyl-tRNA(Gln) + L-glutamate + ADP + phosphate + H(+). It catalyses the reaction L-aspartyl-tRNA(Asn) + L-glutamine + ATP + H2O = L-asparaginyl-tRNA(Asn) + L-glutamate + ADP + phosphate + 2 H(+). In terms of biological role, allows the formation of correctly charged Asn-tRNA(Asn) or Gln-tRNA(Gln) through the transamidation of misacylated Asp-tRNA(Asn) or Glu-tRNA(Gln) in organisms which lack either or both of asparaginyl-tRNA or glutaminyl-tRNA synthetases. The reaction takes place in the presence of glutamine and ATP through an activated phospho-Asp-tRNA(Asn) or phospho-Glu-tRNA(Gln). The chain is Aspartyl/glutamyl-tRNA(Asn/Gln) amidotransferase subunit B from Bifidobacterium animalis subsp. lactis (strain AD011).